A 497-amino-acid polypeptide reads, in one-letter code: Tripartite motif-containing protein 5 (497 aa).

An N-acetylalanine modification is found at Ala-2. The RING-type zinc finger occupies 15–60 (CPICLELLTEPLSLHCGHSFCQACITANHKKSMLYKEGERSCPVCR). A Phosphoserine modification is found at Ser-87. Residues 92–133 (QKVDHCARHGEKLLLFCQEDSKVICWLCERSQEHRGHHTFLM) form a B box-type zinc finger. Cys-97, His-100, Cys-119, and His-125 together coordinate Zn(2+). Residues 137–225 (AQEYHVKLQT…LTKSETEMVQ (89 aa)) are a coiled coil. The tract at residues 187-200 (FEQLREILDWEESN) is required for interaction with GABARAP and for autophagy. The region spanning 283–497 (LKGMLDMFRE…VPMTLCSPSS (215 aa)) is the B30.2/SPRY domain.

This sequence belongs to the TRIM/RBCC family. In terms of assembly, can form homodimers and homotrimers. In addition to lower-order dimerization, also exhibits a higher-order multimerization and both low- and high-order multimerizations are essential for its restriction activity. Interacts with MAP3K7/TAK1, TAB2 and TAB3. Interacts with HSPA8/HSC70, PSMC2, PSMC4, PSMC5 and PSMD7. Interacts with SQSTM1. Interacts (via B30.2/SPRY domain) with HSPA1A/B. Interacts with TRIM6 and TRIM34. Interacts with BECN1; GABARAP. Interacts with ULK1 (phosphorylated form), GABARAPL1, GABARAPL2, MAP1LC3A and MAP1LC3C. Post-translationally, degraded in a proteasome-independent fashion in the absence of viral infection but in a proteasome-dependent fashion following exposure to restriction sensitive virus. In terms of processing, autoubiquitinated in a RING finger- and UBE2D2-dependent manner. Monoubiquitinated by TRIM21. Deubiquitinated by Yersinia YopJ. Ubiquitination may not lead to proteasomal degradation.

The protein localises to the cytoplasm. The protein resides in the nucleus. The enzyme catalyses S-ubiquitinyl-[E2 ubiquitin-conjugating enzyme]-L-cysteine + [acceptor protein]-L-lysine = [E2 ubiquitin-conjugating enzyme]-L-cysteine + N(6)-ubiquitinyl-[acceptor protein]-L-lysine.. The protein operates within protein modification; protein ubiquitination. Its function is as follows. Capsid-specific restriction factor that prevents infection from non-host-adapted retroviruses. Blocks viral replication early in the life cycle, after viral entry but before reverse transcription. In addition to acting as a capsid-specific restriction factor, also acts as a pattern recognition receptor that activates innate immune signaling in response to the retroviral capsid lattice. Binding to the viral capsid triggers its E3 ubiquitin ligase activity, and in concert with the heterodimeric ubiquitin conjugating enzyme complex UBE2V1-UBE2N (also known as UBC13-UEV1A complex) generates 'Lys-63'-linked polyubiquitin chains, which in turn are catalysts in the autophosphorylation of the MAP3K7/TAK1 complex (includes TAK1, TAB2, and TAB3). Activation of the MAP3K7/TAK1 complex by autophosphorylation results in the induction and expression of NF-kappa-B and MAPK-responsive inflammatory genes, thereby leading to an innate immune response in the infected cell. Restricts infection by human immunodeficiency virus type 1 (HIV-1) and simian immunodeficiency virus (SIV-agm). Plays a role in regulating autophagy through activation of autophagy regulator BECN1 by causing its dissociation from its inhibitors BCL2 and TAB2. Also plays a role in autophagy by acting as a selective autophagy receptor which recognizes and targets HIV-1 capsid protein p24 for autophagic destruction. The sequence is that of Tripartite motif-containing protein 5 (TRIM5) from Macaca mulatta (Rhesus macaque).